Reading from the N-terminus, the 352-residue chain is Histidinol-phosphate aminotransferase (352 aa).

Residue Lys211 is modified to N6-(pyridoxal phosphate)lysine.

Belongs to the class-II pyridoxal-phosphate-dependent aminotransferase family. Histidinol-phosphate aminotransferase subfamily. As to quaternary structure, homodimer. Pyridoxal 5'-phosphate serves as cofactor.

It carries out the reaction L-histidinol phosphate + 2-oxoglutarate = 3-(imidazol-4-yl)-2-oxopropyl phosphate + L-glutamate. It participates in amino-acid biosynthesis; L-histidine biosynthesis; L-histidine from 5-phospho-alpha-D-ribose 1-diphosphate: step 7/9. This Haemophilus influenzae (strain PittGG) protein is Histidinol-phosphate aminotransferase.